Reading from the N-terminus, the 150-residue chain is MKKRIIIGNWKTNKTQKEVKEFFKILNASLKNKNICCTFGVAPVAIHLELAKSLAPKQMIIAAQDANYISSGAFTGTISWSQLKDIKIKYVIVGHSERRMYYNETDDIVNKKVKNLLENKMIPILCIGGNIEEFNNKKTYQVCATQLKKA.

Residues Asn9 and Lys11 each contribute to the substrate site. His95 serves as the catalytic Electrophile.

It belongs to the triosephosphate isomerase family. In terms of assembly, homodimer.

The protein resides in the cytoplasm. It carries out the reaction D-glyceraldehyde 3-phosphate = dihydroxyacetone phosphate. Its pathway is carbohydrate biosynthesis; gluconeogenesis. It participates in carbohydrate degradation; glycolysis; D-glyceraldehyde 3-phosphate from glycerone phosphate: step 1/1. The sequence is that of Triosephosphate isomerase (tpiA) from Mycoplasmoides pirum (Mycoplasma pirum).